We begin with the raw amino-acid sequence, 274 residues long: NH(3)-dependent NAD(+) synthetase (274 aa).

An ATP-binding site is contributed by 46–53; sequence GISGGQDS. Asp-52 contacts Mg(2+). Arg-140 is a deamido-NAD(+) binding site. An ATP-binding site is contributed by Thr-160. A Mg(2+)-binding site is contributed by Glu-165. 2 residues coordinate deamido-NAD(+): Lys-173 and Asp-180. 2 residues coordinate ATP: Lys-189 and Thr-211. Residue 260-261 coordinates deamido-NAD(+); that stretch reads HK.

The protein belongs to the NAD synthetase family. Homodimer.

The catalysed reaction is deamido-NAD(+) + NH4(+) + ATP = AMP + diphosphate + NAD(+) + H(+). It participates in cofactor biosynthesis; NAD(+) biosynthesis; NAD(+) from deamido-NAD(+) (ammonia route): step 1/1. Its function is as follows. Catalyzes the ATP-dependent amidation of deamido-NAD to form NAD. Uses ammonia as a nitrogen source. This Streptococcus pyogenes serotype M18 (strain MGAS8232) protein is NH(3)-dependent NAD(+) synthetase.